A 378-amino-acid chain; its full sequence is UPF0754 membrane protein BcerKBAB4_0766 (378 aa).

Helical transmembrane passes span 1–21 and 357–377; these read MNIWLNMLITTGLGAIIGGYT and YLGALLGGTIGFIQGLLLLFL.

The protein belongs to the UPF0754 family.

The protein localises to the cell membrane. This Bacillus mycoides (strain KBAB4) (Bacillus weihenstephanensis) protein is UPF0754 membrane protein BcerKBAB4_0766.